The following is a 279-amino-acid chain: Pleckstrin homology domain-containing family F member 1 (279 aa).

One can recognise a PH domain in the interval 35–131 (VLLGEGVLTK…WISHIEECVR (97 aa)). Residues 152–212 (DKATDICMRC…VCSLCYRELA (61 aa)) form an FYVE-type zinc finger. Zn(2+) is bound by residues Cys-158, Cys-161, Cys-175, Cys-178, Cys-183, Cys-186, Cys-204, and Cys-207. The interval 219–264 (EAKERFRGSPGQLTHLGSTMCGASSGDDDDSDEDREGSGDGDWPTQ) is disordered. Residues 244–253 (GDDDDSDEDR) show a composition bias toward acidic residues.

The protein localises to the nucleus. It localises to the cytoplasm. It is found in the perinuclear region. Its subcellular location is the lysosome. In terms of biological role, may induce apoptosis through the lysosomal-mitochondrial pathway. Translocates to the lysosome initiating the permeabilization of lysosomal membrane (LMP) and resulting in the release of CTSD and CTSL to the cytoplasm. Triggers the caspase-independent apoptosis by altering mitochondrial membrane permeabilization (MMP) resulting in the release of PDCD8. The polypeptide is Pleckstrin homology domain-containing family F member 1 (Plekhf1) (Rattus norvegicus (Rat)).